A 156-amino-acid polypeptide reads, in one-letter code: Probable succinate transporter subunit YjjB (156 aa).

Helical transmembrane passes span 7–27 (WALL…AMVF), 54–74 (FGMN…IIGI), 86–106 (VFTV…TAMI), and 128–148 (FLKA…PGIW).

This sequence belongs to the ThrE exporter (TC 2.A.79) family. The transporter is composed of YjjB and YjjP.

The protein resides in the cell inner membrane. In terms of biological role, involved in succinate export with YjjP. Both proteins are required for export. The protein is Probable succinate transporter subunit YjjB of Pectobacterium atrosepticum (strain SCRI 1043 / ATCC BAA-672) (Erwinia carotovora subsp. atroseptica).